A 34-amino-acid polypeptide reads, in one-letter code: Chlorotoxin-like peptide AaCtx (34 aa).

4 disulfide bridges follow: C2–C19, C5–C27, C16–C32, and C20–C34.

Belongs to the short scorpion toxin superfamily. Chloride channel inhibitor family. As to expression, expressed by the venom gland.

The protein localises to the secreted. Toxin with unknown function in healthy organisms. On glioma cells, interacts with chloride channels (probably ClC-3/CLCN3) and MMP2 at the surface of glioma cells. This complex is then internalized via caveolae, thus inhibiting the chloride channels necessary for cell shrinkage and tumor propagation. Inhibits migration and invasion of U87 glioma cells expressing CLCN3/ClC-3 voltage-gated chloride channels. This Androctonus australis (Sahara scorpion) protein is Chlorotoxin-like peptide AaCtx.